The primary structure comprises 2104 residues: 5'-3' DNA helicase ZGRF1 (2104 aa).

Polar residues predominate over residues 335-345 (SSPIHSSTVDG). A disordered region spans residues 335–359 (SSPIHSSTVDGNDTERKPKAQEDDV). Ser-336 is modified (phosphoserine). Over residues 347-356 (DTERKPKAQE) the composition is skewed to basic and acidic residues. Ser-793 and Ser-864 each carry phosphoserine. Zn(2+) is bound by residues Cys-1349, His-1351, Cys-1374, and Cys-1382. A GRF-type zinc finger spans residues 1349-1391 (CHHSQPAKLVMVKKEGPNKGRLFYTCDGPKADRCKFFKWLEDV). A disordered region spans residues 2085-2104 (VEEKQKKKSEKEKSKDKSHS).

As to quaternary structure, interacts with DNA repair protein RAD51; the interaction promotes RAD51 strand exchange activity. Also interacts with DNA repair proteins EXO1 and BRCA1; the interactions are increased following DNA damage induction.

The protein localises to the nucleus. The enzyme catalyses ATP + H2O = ADP + phosphate + H(+). It carries out the reaction Couples ATP hydrolysis with the unwinding of duplex DNA at the replication fork by translocating in the 5'-3' direction. This creates two antiparallel DNA single strands (ssDNA). The leading ssDNA polymer is the template for DNA polymerase III holoenzyme which synthesizes a continuous strand.. Its function is as follows. 5'-3' DNA helicase which is recruited to sites of DNA damage and promotes repair of replication-blocking DNA lesions through stimulation of homologous recombination (HR). Promotes HR by directly stimulating RAD51-mediated strand exchange activity. Not required to load RAD51 at sites of DNA damage but promotes recombinational repair after RAD51 recruitment. Also promotes HR by positively regulating EXO1-mediated DNA end resection of double-strand breaks. Required for recruitment of replication protein RPA2 to DNA damage sites. Promotes the initiation of the G2/M checkpoint but not its maintenance. Catalyzes Holliday junction branch migration and dissociation of D-loops and DNA flaps. In Homo sapiens (Human), this protein is 5'-3' DNA helicase ZGRF1 (ZGRF1).